The following is a 64-amino-acid chain: Hypoxia-inducible lipid droplet-associated protein (64 aa).

The tract at residues 1–37 (MKFMLNLYVLGIMLTLLSIFVRVMESLGGLLESPLPG) is required for targeting to lipid droplets. The chain crosses the membrane as a helical span at residues 7 to 24 (LYVLGIMLTLLSIFVRVM). Polar residues predominate over residues 42–51 (TRGQLANTQP). Positions 42–64 (TRGQLANTQPPKGLPDHPSRGVQ) are disordered. Basic and acidic residues predominate over residues 55-64 (LPDHPSRGVQ).

It is found in the lipid droplet. The protein localises to the secreted. It localises to the membrane. In terms of biological role, increases intracellular lipid accumulation. Stimulates expression of cytokines including IL6, MIF and VEGFA. Enhances cell growth and proliferation. This is Hypoxia-inducible lipid droplet-associated protein (Hilpda) from Mus musculus (Mouse).